Here is a 511-residue protein sequence, read N- to C-terminus: Arabinose import ATP-binding protein AraG (511 aa).

ABC transporter domains lie at Leu5–Arg240 and Arg240–Arg501. Residue Gly37–Ser44 coordinates ATP.

This sequence belongs to the ABC transporter superfamily. Arabinose importer (TC 3.A.1.2.2) family. The complex is composed of two ATP-binding proteins (AraG), two transmembrane proteins (AraH) and a solute-binding protein (AraF).

The protein resides in the cell inner membrane. The enzyme catalyses L-arabinose(out) + ATP + H2O = L-arabinose(in) + ADP + phosphate + H(+). Its function is as follows. Part of the ABC transporter complex AraFGH involved in arabinose import. Responsible for energy coupling to the transport system. The sequence is that of Arabinose import ATP-binding protein AraG from Ralstonia nicotianae (strain ATCC BAA-1114 / GMI1000) (Ralstonia solanacearum).